The following is a 723-amino-acid chain: Cyclin-T2 (723 aa).

Residues M1–S298 form an interaction with MDFIC and MDFI region. Positions F12–I147 constitute a Cyclin N-terminal domain. The tract at residues R250–S298 is interaction with POLR2A. 2 stretches are compositionally biased toward polar residues: residues P297–F307 and N314–A325. Disordered stretches follow at residues P297–A325, S340–Q364, A385–P428, and A458–K645. A compositionally biased stretch (basic and acidic residues) spans D395–H409. Residue K404 forms a Glycyl lysine isopeptide (Lys-Gly) (interchain with G-Cter in SUMO2) linkage. S477 is subject to Phosphoserine. Composition is skewed to basic and acidic residues over residues D489–G503, G517–G543, and I552–A565. The segment covering N566–H576 has biased composition (basic residues). Position 596 is a phosphoserine (S596). The span at S631–K645 shows a compositional bias: low complexity.

It belongs to the cyclin family. Cyclin C subfamily. As to quaternary structure, interacts with CDK9 to form P-TEFb. Interacts with POLR2A (via the C-terminal domain (CTD)); mediates transcriptional activity. Interacts with HEXIM1; mediates formation of a tripartite complex with KPNA2. Interacts with HEXIM2. Interacts with PKN1; enhances MYOD1-dependent transcription. P-TEFB complex interacts with RB1; promotes phosphorylation of RB1. P-TEFB complex interacts with MYOD1; promotes the transcriptional activity of MYOD1 through its CDK9-mediated phosphorylation. Interacts with MDFI and MDFIC. Highly expressed in all phases of skeletal muscle differentiation, particularly in later stages. Highly expressed in skeletal muscle. Significantly expressed in heart, brain, kidney, liver, testis, and pancreas.

The protein resides in the cytoplasm. It localises to the perinuclear region. It is found in the nucleus. Functionally, regulatory subunit of the cyclin-dependent kinase pair (CDK9/cyclin T) complex, also called positive transcription elongation factor B (P-TEFB), which is proposed to facilitate the transition from abortive to production elongation by phosphorylating the CTD (carboxy-terminal domain) of the large subunit of RNA polymerase II (RNAP II). The activity of this complex is regulated by binding with 7SK snRNA. Plays a role during muscle differentiation; P-TEFB complex interacts with MYOD1; this tripartite complex promotes the transcriptional activity of MYOD1 through its CDK9-mediated phosphorylation and binds the chromatin of promoters and enhancers of muscle-specific genes; this event correlates with hyperphosphorylation of the CTD domain of RNA pol II. In addition, enhances MYOD1-dependent transcription through interaction with PKN1. Involved in early embryo development. The polypeptide is Cyclin-T2 (Mus musculus (Mouse)).